The chain runs to 437 residues: Protein farnesyltransferase subunit beta (437 aa).

PFTB repeat units follow at residues 123 to 164 (ATDV…CIIG), 174 to 215 (REKL…SLTN), 222 to 263 (FEGT…VILK), 270 to 312 (LKSL…PLLH), and 332 to 374 (QQAL…SIAQ). Residues 248-251 (HGGY) and 291-294 (RCNK) contribute to the (2E,6E)-farnesyl diphosphate site. Zn(2+) is bound by residues aspartate 297 and cysteine 299. Residue 300–303 (YSFW) participates in (2E,6E)-farnesyl diphosphate binding. Residue histidine 362 participates in Zn(2+) binding. The residue at position 436 (threonine 436) is a Phosphothreonine.

This sequence belongs to the protein prenyltransferase subunit beta family. In terms of assembly, heterodimer of FNTA and FNTB. The cofactor is Zn(2+).

The enzyme catalyses L-cysteinyl-[protein] + (2E,6E)-farnesyl diphosphate = S-(2E,6E)-farnesyl-L-cysteinyl-[protein] + diphosphate. Its function is as follows. Essential subunit of the farnesyltransferase complex. Catalyzes the transfer of a farnesyl moiety from farnesyl diphosphate to a cysteine at the fourth position from the C-terminus of several proteins having the C-terminal sequence Cys-aliphatic-aliphatic-X. The protein is Protein farnesyltransferase subunit beta (FNTB) of Bos taurus (Bovine).